A 652-amino-acid chain; its full sequence is Forkhead box protein O1-A (652 aa).

Disordered stretches follow at residues 1–57 (MADA…EPSS), 208–277 (SSWW…NSHS), and 359–406 (NLLS…QQTQ). Polar residues predominate over residues 41 to 57 (DSNTSSPAPSVKQEPSS). Positions 134 to 228 (WGNMSYADLI…KSGKSPRRRA (95 aa)) form a DNA-binding region, fork-head. A compositionally biased stretch (basic residues) spans 238–249 (AKSRGRAAKKKL). Residues 362–397 (SPKNPSTGGPGSGSNQSSPSSLMQASPGYSPYSSPG) show a composition bias toward low complexity.

Its subcellular location is the cytoplasm. It localises to the nucleus. In terms of biological role, transcription factor that regulates metabolic homeostasis in response to oxidative stress. Binds to the consensus sequence 5'-TT[G/A]TTTTG-3' and the related Daf-16 family binding element (DBE) with consensus sequence 5'-TT[G/A]TTTAC-3'. Main regulator of redox balance and osteoblast numbers and controls bone mass. Orchestrates the endocrine function of the skeleton in regulating glucose metabolism. May be involved in regulating cellular homeostasis in the eye. May act as a positive regulator of apoptosis in cardiac smooth muscle cells as a result of its transcriptional activation of pro-apoptotic genes. The polypeptide is Forkhead box protein O1-A (foxo1a) (Danio rerio (Zebrafish)).